The primary structure comprises 316 residues: UDP-N-acetylenolpyruvoylglucosamine reductase (316 aa).

The 199-residue stretch at Val27–Lys225 folds into the FAD-binding PCMH-type domain. Arg190 is an active-site residue. Catalysis depends on Ser239, which acts as the Proton donor. The active site involves Glu309.

Belongs to the MurB family. FAD serves as cofactor.

Its subcellular location is the cytoplasm. It catalyses the reaction UDP-N-acetyl-alpha-D-muramate + NADP(+) = UDP-N-acetyl-3-O-(1-carboxyvinyl)-alpha-D-glucosamine + NADPH + H(+). The protein operates within cell wall biogenesis; peptidoglycan biosynthesis. Functionally, cell wall formation. In Coxiella burnetii (strain CbuK_Q154) (Coxiella burnetii (strain Q154)), this protein is UDP-N-acetylenolpyruvoylglucosamine reductase.